Consider the following 673-residue polypeptide: Ribonucleoprotein PTB-binding 2 (673 aa).

The segment covering 1 to 17 (MAARGGGAGGAGSGSGP) has biased composition (gly residues). Positions 1–34 (MAARGGGAGGAGSGSGPSAGTAGEAAEPALRPGE) are disordered. Low complexity predominate over residues 18 to 29 (SAGTAGEAAEPA). 3 RRM domains span residues 58–129 (RKIL…LQPT), 131–209 (ALLC…WMDV), and 220–298 (KCLC…FCAP). The disordered stretch occupies residues 481-549 (QLPAGQAGPG…KGTEVASKNQ (69 aa)). Positions 499–512 (SASVSISEASFSGS) are enriched in low complexity. Residues 529–549 (TGNQKTPQSQPKGTEVASKNQ) show a composition bias toward polar residues.

Interacts with PTBP1 and RAVER1. Expressed throughout embryogenesis. Detected at low levels in adult lung, brain and kidney, but not in the other tissues tested.

It localises to the nucleus. The protein localises to the cytoplasm. Functionally, may bind single-stranded nucleic acids. This is Ribonucleoprotein PTB-binding 2 (Raver2) from Mus musculus (Mouse).